The sequence spans 237 residues: Synapse differentiation-inducing gene protein 1-like (237 aa).

3 disordered regions span residues 1–23 (MESL…HRPY), 84–111 (AGSC…PGQA), and 127–148 (ELQG…ESEC). Residues 1–161 (MESLSELQNP…FLTLPPRDHL (161 aa)) lie on the Extracellular side of the membrane. Residues 129-148 (QGQEDSQEEESDGTSSESEC) are compositionally biased toward acidic residues. The helical transmembrane segment at 162–182 (GLTLFSMLCCFWPLGIAAFYF) threads the bilayer. Residues 183 to 204 (SQGTSKAISKGDFRLASTTSRR) are Cytoplasmic-facing. A helical transmembrane segment spans residues 205–225 (ALFLATLSIAVGAGLYVAVVV). Residues 226 to 237 (ALAAYMSQNGHG) lie on the Extracellular side of the membrane.

The protein belongs to the CD225/Dispanin family. As to expression, expression is restricted to the caudate-putamen. Down-regulated in R6/2 transgenic mice, a model for Huntington disease.

The protein resides in the membrane. The protein localises to the golgi apparatus. It is found in the cis-Golgi network. The protein is Synapse differentiation-inducing gene protein 1-like (Syndig1l) of Mus musculus (Mouse).